Here is a 206-residue protein sequence, read N- to C-terminus: MKFEITTLDGGEAGSVEVNEAIFGLEPRADLLQRCVRWQLAKRQAGTHKVKTRSEISRTTKKMYKQKGTGNARHGAASAPQFRGGARAFGPVVRSHAHDLPKKVRALALRHALSAKARAASLVVVDDVRLEDGKTKALKDRFGALGWSNALIIGGAEVDENFGRAARNLPSIDVLPVQGINVYDILRRDKLVLTRAAVDALEARFK.

A disordered region spans residues 49–79 (KVKTRSEISRTTKKMYKQKGTGNARHGAASA).

The protein belongs to the universal ribosomal protein uL4 family. In terms of assembly, part of the 50S ribosomal subunit.

One of the primary rRNA binding proteins, this protein initially binds near the 5'-end of the 23S rRNA. It is important during the early stages of 50S assembly. It makes multiple contacts with different domains of the 23S rRNA in the assembled 50S subunit and ribosome. Its function is as follows. Forms part of the polypeptide exit tunnel. This Methylobacterium sp. (strain 4-46) protein is Large ribosomal subunit protein uL4.